We begin with the raw amino-acid sequence, 764 residues long: MKKRKVLIPLMALSTILVSSTGNLEVIQAEVKQENRLLNESESSSQGLLGYYFSDLNFQAPMVVTSSTTGDLSIPSSELENIPSENQYFQSAIWSGFIKVKKSDEYTFATSADNHVTMWVDDQEVINKASNSNKIRLEKGRLYQIKIQYQRENPTEKGLDFKLYWTDSQNKKEVISSDNLQLPELKQKSSNSRKKRSTSAGPTVPDRDNDGIPDSLEVEGYTVDVKNKRTFLSPWISNIHEKKGLTKYKSSPEKWSTASDPYSDFEKVTGRIDKNVSPEARHPLVAAYPIVHVDMENIILSKNEDQSTQNTDSQTRTISKNTSTSRTHTSEVHGNAEVHASFFDIGGSVSAGFSNSNSSTVAIDHSLSLAGERTWAETMGLNTADTARLNANIRYVNTGTAPIYNVLPTTSLVLGKNQTLATIKAKENQLSQILAPNNYYPSKNLAPIALNAQDDFSSTPITMNYNQFLELEKTKQLRLDTDQVYGNIATYNFENGRVRVDTGSNWSEVLPQIQETTARIIFNGKDLNLVERRIAAVNPSDPLETTKPDMTLKEALKIAFGFNEPNGNLQYQGKDITEFDFNFDQQTSQNIKNQLAELNATNIYTVLDKIKLNAKMNILIRDKRFHYDRNNIAVGADESVVKEAHREVINSSTEGLLLNIDKDIRKILSGYIVEIEDTEGLKEVINDRYDMLNISSLRQDGKTFIDFKKYNDKLPLYISNPNYKVNVYAVTKENTIINPSENGDTSTNGIKKILIFSKKGYEIG.

The signal sequence occupies residues 1–29 (MKKRKVLIPLMALSTILVSSTGNLEVIQA). Positions 30-287 (EVKQENRLLN…PEARHPLVAA (258 aa)) are domain 1, calcium-binding; LF and EF binding sites. The PA14 domain maps to 43 to 179 (SSSQGLLGYY…NKKEVISSDN (137 aa)). Positions 176-214 (SSDNLQLPELKQKSSNSRKKRSTSAGPTVPDRDNDGIPD) are disordered. 5 residues coordinate Ca(2+): D206, D208, D210, I212, and E217. The segment at 231–239 (FLSPWISNI) is alpha-clamp. Residues S251, K254, and D264 each contribute to the Ca(2+) site. The interval 288-516 (YPIVHVDMEN…SEVLPQIQET (229 aa)) is domain 2, membrane insertion and heptamerization. The tract at residues 302–333 (KNEDQSTQNTDSQTRTISKNTSTSRTHTSEVH) is disordered. A compositionally biased stretch (polar residues) spans 306–327 (QSTQNTDSQTRTISKNTSTSRT). 2 beta stranded membrane-spanning segments follow: residues 331-342 (EVHGNAEVHASF) and 345-354 (IGGSVSAGFS). The domain 3, heptamerization stretch occupies residues 517-624 (TARIIFNGKD…KMNILIRDKR (108 aa)). The domain 4, binding to the receptor stretch occupies residues 625–764 (FHYDRNNIAV…IFSKKGYEIG (140 aa)).

Belongs to the bacterial binary toxin family. As to quaternary structure, interacts with host ANTXR1 and ANTXR2. In terms of assembly, homooligomer; homooligomerizes to form homoheptamers (PA-63(7)) or homooctamers (PA-63(8)). PA-63(7) or PA-63(8) form ring-shaped oligomers that are in a pre-pore conformation, which do not penetrate the host membrane. PA-63(8) displays an enhanced stability, suggesting that this form circulates in the blood to reach and exert toxicity even in distant tissues. Interacts with lethal factor (LF) and edema factor (EF); can bind LF and EF simultaneously and interaction takes place following homooligomerization on the host cell membrane. PA-63(7) homoheptamer interacts with three molecules of LF to form the PA(7)LF(3) complex, in which the relative position of the N-terminal alpha-helices in the three LFs determines which factor is translocated first. In terms of processing, proteolytic activation by FURIN cleaves the protein in two parts, PA-20 and PA-63; the latter is the mature protein. The cleavage occurs at the cell surface and probably in the serum of infected animals as well; both native and cleaved PA are able to bind to the cell receptor. The release of PA-20 from the remaining receptor-bound PA-63 exposes the binding site for EF and LF, and promotes oligomerization and internalization of the protein.

The protein localises to the secreted. The protein resides in the host cell membrane. It is found in the host endosome membrane. Protective antigen constitutes one of the three proteins composing the anthrax toxin; it mediates attachment to host cells and translocation of edema factor (EF) and lethal factor (LF) into the host cytoplasm. PA associated with LF forms the lethal toxin (LeTx) and causes death when injected; PA associated with EF forms the edema toxin (EdTx) and produces edema. PA induces immunity to infection with anthrax. Functionally, mediates the attachment to host cells by binding host cell receptors ANTXR1 and ANTXR2. Following host cell surface attachment, PA is cleaved by FURIN to generate the PA-63 (Protective antigen PA-63) form, which constitutes the mature form of the protein that oligomerizes and forms a pore to translocate the enzymatic toxin components edema factor (EF) and lethal factor (LF) into the host cytosol. Its function is as follows. Mature form that oligomerizes and forms a pore to translocate the enzymatic toxin components edema factor (EF) and lethal factor (LF) into the host cytosol. Following attachment to host cell receptors and cleavage by FURIN, homooligomerizes to form ring-shaped oligomers that are in a pre-pore conformation, and associates with EF and LF. Toxin-leaded complexes are then endocytosed in a clathrin-dependent process, followed by a conformational change of oligomerized PA-63 from the pre-pore to pore state, which is triggered by the low pH in the endosome. Once active, the pore mediates unfolding of EF and LF, which pass through the pore and translocate into the host cytosol. This is Protective antigen (pagA) from Bacillus anthracis.